The following is a 108-amino-acid chain: DNA-directed RNA polymerase subunit omega (108 aa).

It belongs to the RNA polymerase subunit omega family. As to quaternary structure, the RNAP catalytic core consists of 2 alpha, 1 beta, 1 beta' and 1 omega subunit. When a sigma factor is associated with the core the holoenzyme is formed, which can initiate transcription.

The enzyme catalyses RNA(n) + a ribonucleoside 5'-triphosphate = RNA(n+1) + diphosphate. Functionally, promotes RNA polymerase assembly. Latches the N- and C-terminal regions of the beta' subunit thereby facilitating its interaction with the beta and alpha subunits. In Mycolicibacterium paratuberculosis (strain ATCC BAA-968 / K-10) (Mycobacterium paratuberculosis), this protein is DNA-directed RNA polymerase subunit omega.